The chain runs to 258 residues: Ribosomal RNA small subunit methyltransferase J (258 aa).

S-adenosyl-L-methionine-binding positions include E123–R124 and D177. Positions I232 to A258 are disordered. Residues H239–P252 show a composition bias toward basic and acidic residues.

It belongs to the methyltransferase superfamily. RsmJ family.

The protein resides in the cytoplasm. It catalyses the reaction guanosine(1516) in 16S rRNA + S-adenosyl-L-methionine = N(2)-methylguanosine(1516) in 16S rRNA + S-adenosyl-L-homocysteine + H(+). Specifically methylates the guanosine in position 1516 of 16S rRNA. The chain is Ribosomal RNA small subunit methyltransferase J from Pseudomonas putida (strain W619).